The primary structure comprises 151 residues: 3-hydroxyacyl-[acyl-carrier-protein] dehydratase FabZ (151 aa).

Residue His-54 is part of the active site.

It belongs to the thioester dehydratase family. FabZ subfamily.

It is found in the cytoplasm. It catalyses the reaction a (3R)-hydroxyacyl-[ACP] = a (2E)-enoyl-[ACP] + H2O. Involved in unsaturated fatty acids biosynthesis. Catalyzes the dehydration of short chain beta-hydroxyacyl-ACPs and long chain saturated and unsaturated beta-hydroxyacyl-ACPs. The polypeptide is 3-hydroxyacyl-[acyl-carrier-protein] dehydratase FabZ (Klebsiella pneumoniae (strain 342)).